A 517-amino-acid chain; its full sequence is Enantioselective amidase (517 aa).

Active-site charge relay system residues include Lys-96 and Ser-173. The active-site Acyl-ester intermediate is Ser-197.

The protein belongs to the amidase family. Homooctamer.

It carries out the reaction a monocarboxylic acid amide + H2O = a monocarboxylate + NH4(+). This is Enantioselective amidase (amdA) from Rhodococcus rhodochrous.